The following is a 189-amino-acid chain: Thymidylate kinase (189 aa).

7-14 (GIDTAGKS) provides a ligand contact to ATP.

This sequence belongs to the thymidylate kinase family.

It carries out the reaction dTMP + ATP = dTDP + ADP. Phosphorylation of dTMP to form dTDP in both de novo and salvage pathways of dTTP synthesis. The protein is Thymidylate kinase of Aliarcobacter butzleri (strain RM4018) (Arcobacter butzleri).